The chain runs to 1258 residues: Phospholipid-transporting ATPase C887.12 (1258 aa).

Disordered regions lie at residues 1–41 and 53–83; these read MARD…LGED and YISSSGQNSTNPFLADTRIENSPLGSESKAN. Residues 1 to 183 are Cytoplasmic-facing; sequence MARDVDNKQN…PKFLKEQFSK (183 aa). Polar residues predominate over residues 53–64; the sequence is YISSSGQNSTNP. The chain crosses the membrane as a helical span at residues 184 to 204; that stretch reads YANLFFLFTAVVQQIPGITPV. The Lumenal segment spans residues 205–208; the sequence is NRYT. Residues 209–229 form a helical membrane-spanning segment; the sequence is TIGPMLIVLSVSGIKEIMEDI. Over 230 to 406 the chain is Cytoplasmic; sequence KRKKQDQELN…TSVEKQVNSQ (177 aa). A helical membrane pass occupies residues 407–427; the sequence is ILFLLCIFVFLCFASSLGALI. The Lumenal portion of the chain corresponds to 428 to 451; it reads HRSVYGSALSYVKYTSNRAGMFFK. Residues 452–472 form a helical membrane-spanning segment; it reads GLLTFWILYSNLVPISLFVTF. Residues 473–974 lie on the Cytoplasmic side of the membrane; it reads ELVRYIQAQL…KLILYSFYKN (502 aa). The active-site 4-aspartylphosphate intermediate is the Asp-518. The ATP site is built by Asp-518, Lys-519, Thr-520, Glu-613, Phe-654, Ser-656, Lys-659, Lys-677, Arg-710, Thr-711, Thr-790, Gly-791, Asp-792, Arg-883, and Lys-889. Asp-518 lines the Mg(2+) pocket. Thr-520 is a binding site for Mg(2+). Residue Asp-909 participates in Mg(2+) binding. Residues Asn-912 and Asp-913 each contribute to the ATP site. Asp-913 serves as a coordination point for Mg(2+). The chain crosses the membrane as a helical span at residues 975 to 995; the sequence is IALYMTQFWYAFCNAFSGQVI. Residues 996–998 lie on the Lumenal side of the membrane; it reads FES. Residues 999–1019 traverse the membrane as a helical segment; it reads WSISLYNVLFTVLPPVVIGIF. The Cytoplasmic portion of the chain corresponds to 1020-1051; that stretch reads DQFVSAGQLFQYPQLYQLGQRSEFFNLKRFWS. Residues 1052 to 1072 traverse the membrane as a helical segment; that stretch reads WITNGFYHSLLLFLCSIAVFY. Residues 1073-1086 are Lumenal-facing; sequence YDGPNKDGLASGHW. A helical membrane pass occupies residues 1087-1107; it reads VWGTTLYAAILATVLGKAALI. Residue Lys-1103 coordinates a 1,2-diacyl-sn-glycero-3-phospho-(1D-myo-inositol 4-phosphate). Residues 1108–1115 are Cytoplasmic-facing; the sequence is SNHWTQYT. A helical transmembrane segment spans residues 1116-1136; sequence VIATLGSFLLWIVFMPIYAVA. Over 1137 to 1148 the chain is Lumenal; the sequence is APAIGFSKEYYG. A helical transmembrane segment spans residues 1149–1169; the sequence is IIPHLYGNLKFWASLLVLPTI. Over 1170-1258 the chain is Cytoplasmic; the sequence is ALMRDFVWKY…HTRGAYGEMR (89 aa). 5 residues coordinate a 1,2-diacyl-sn-glycero-3-phospho-(1D-myo-inositol 4-phosphate): Arg-1173, Trp-1177, Lys-1178, Tyr-1189, and His-1190.

This sequence belongs to the cation transport ATPase (P-type) (TC 3.A.3) family. Type IV subfamily. Mg(2+) serves as cofactor.

It is found in the endoplasmic reticulum membrane. The protein resides in the golgi apparatus. The protein localises to the trans-Golgi network membrane. The enzyme catalyses ATP + H2O + phospholipidSide 1 = ADP + phosphate + phospholipidSide 2.. The catalysed reaction is a 1,2-diacyl-sn-glycero-3-phospho-L-serine(out) + ATP + H2O = a 1,2-diacyl-sn-glycero-3-phospho-L-serine(in) + ADP + phosphate + H(+). It carries out the reaction a 1,2-diacyl-sn-glycero-3-phosphoethanolamine(out) + ATP + H2O = a 1,2-diacyl-sn-glycero-3-phosphoethanolamine(in) + ADP + phosphate + H(+). Functionally, catalytic component of a P4-ATPase flippase complex which catalyzes the hydrolysis of ATP coupled to the transport of phosphatidylserine and small amounts of ethanolamine from the lumen to the cytosolic leaflet of the trans-Golgi network and ensures the maintenance of asymmetric distribution of phospholipids. The polypeptide is Phospholipid-transporting ATPase C887.12 (Schizosaccharomyces pombe (strain 972 / ATCC 24843) (Fission yeast)).